The chain runs to 273 residues: Formamidopyrimidine-DNA glycosylase (273 aa).

The Schiff-base intermediate with DNA role is filled by P2. Residue E3 is the Proton donor of the active site. K58 (proton donor; for beta-elimination activity) is an active-site residue. H92, R111, and K153 together coordinate DNA. The FPG-type zinc-finger motif lies at 238–272 (KVYGREGQSCLSCSSTIIKIKHSGRSTFYCKTCQY). The active-site Proton donor; for delta-elimination activity is R262.

It belongs to the FPG family. As to quaternary structure, monomer. Requires Zn(2+) as cofactor.

The catalysed reaction is Hydrolysis of DNA containing ring-opened 7-methylguanine residues, releasing 2,6-diamino-4-hydroxy-5-(N-methyl)formamidopyrimidine.. It catalyses the reaction 2'-deoxyribonucleotide-(2'-deoxyribose 5'-phosphate)-2'-deoxyribonucleotide-DNA = a 3'-end 2'-deoxyribonucleotide-(2,3-dehydro-2,3-deoxyribose 5'-phosphate)-DNA + a 5'-end 5'-phospho-2'-deoxyribonucleoside-DNA + H(+). In terms of biological role, involved in base excision repair of DNA damaged by oxidation or by mutagenic agents. Acts as a DNA glycosylase that recognizes and removes damaged bases. Has a preference for oxidized purines, such as 7,8-dihydro-8-oxoguanine (8-oxoG). Has AP (apurinic/apyrimidinic) lyase activity and introduces nicks in the DNA strand. Cleaves the DNA backbone by beta-delta elimination to generate a single-strand break at the site of the removed base with both 3'- and 5'-phosphates. The polypeptide is Formamidopyrimidine-DNA glycosylase (Rickettsia conorii (strain ATCC VR-613 / Malish 7)).